The primary structure comprises 121 residues: Centrocin 2 (121 aa).

The first 20 residues, 1-20 (MMIKIAVVLCAVMATSMVFA), serve as a signal peptide directing secretion. Positions 21-50 (NDVKEQELADLLDLLISEEVSSPDDAVAES) are excised as a propeptide. A 6'-bromotryptophan mark is found at W51 and W59. A disulfide bridge connects residues C77 and C112. The propeptide occupies 83–106 (SPQEARAKVLEAFPEMKESDLDEE). Q107 carries the pyrrolidone carboxylic acid modification. H119 bears the Histidine amide mark.

In terms of assembly, heterodimer of a light and a heavy chain, probably disulfide-linked.

In terms of biological role, has antimicrobial activity against Gram-negative bacteria, Gram-positive bacteria and against fungi with minimum inhibitory concentration (MIC) between 0.78 uM and 50 uM. Shows little hemolytic activity at concentrations up to 12.5 uM but &gt;50% lysis at 100 uM. The chain is Centrocin 2 from Echinus esculentus (Sea urchin).